The chain runs to 391 residues: S-adenosylmethionine synthase 1 (391 aa).

A Mg(2+)-binding site is contributed by E9. Position 15 (H15) interacts with ATP. Residue E43 participates in K(+) binding. L-methionine is bound by residues E56 and Q99. Residues 167 to 169 (DGK), 235 to 238 (SGRF), D246, 252 to 253 (RK), A269, K273, and K277 contribute to the ATP site. Position 246 (D246) interacts with L-methionine. K277 contributes to the L-methionine binding site.

Belongs to the AdoMet synthase family. In terms of assembly, homotetramer. The cofactor is Mn(2+). Mg(2+) is required as a cofactor. Requires Co(2+) as cofactor. K(+) serves as cofactor.

It localises to the cytoplasm. It catalyses the reaction L-methionine + ATP + H2O = S-adenosyl-L-methionine + phosphate + diphosphate. It participates in amino-acid biosynthesis; S-adenosyl-L-methionine biosynthesis; S-adenosyl-L-methionine from L-methionine: step 1/1. Its function is as follows. Catalyzes the formation of S-adenosylmethionine from methionine and ATP. The reaction comprises two steps that are both catalyzed by the same enzyme: formation of S-adenosylmethionine (AdoMet) and triphosphate, and subsequent hydrolysis of the triphosphate. This is S-adenosylmethionine synthase 1 (METK1) from Vitis vinifera (Grape).